Consider the following 86-residue polypeptide: Putative antitoxin VapB5 (86 aa).

This sequence belongs to the phD/YefM antitoxin family. As to quaternary structure, forms a complex with VapC5.

In terms of biological role, probable antitoxin component of a probable type II toxin-antitoxin (TA) system. The cognate toxin is VapC5. The polypeptide is Putative antitoxin VapB5 (vapB5) (Mycobacterium tuberculosis (strain CDC 1551 / Oshkosh)).